The sequence spans 388 residues: Cytochrome b (388 aa).

Helical transmembrane passes span 32-52 (FGSL…TLAM), 76-98 (WLIR…LHVG), 113-133 (TWTI…LGYV), and 179-199 (FFAL…MHLI). Residues H82 and H96 each coordinate heme b. Residues H183 and H197 each contribute to the heme b site. H202 is a binding site for a ubiquinone. 4 helical membrane passes run 226–246 (FIFK…IFIF), 290–310 (LLGV…PITD), 322–342 (LSKI…QLGA), and 349–369 (FIEF…IIVP).

The protein belongs to the cytochrome b family. As to quaternary structure, fungal cytochrome b-c1 complex contains 10 subunits; 3 respiratory subunits, 2 core proteins and 5 low-molecular weight proteins. Cytochrome b-c1 complex is a homodimer. Requires heme b as cofactor.

The protein localises to the mitochondrion inner membrane. Its function is as follows. Component of the ubiquinol-cytochrome c reductase complex (complex III or cytochrome b-c1 complex) that is part of the mitochondrial respiratory chain. The b-c1 complex mediates electron transfer from ubiquinol to cytochrome c. Contributes to the generation of a proton gradient across the mitochondrial membrane that is then used for ATP synthesis. This is Cytochrome b (cob) from Zymoseptoria tritici (Speckled leaf blotch fungus).